The chain runs to 146 residues: uncharacterized protein (146 aa).

Positions Val9–His141 constitute an HTH marR-type domain. A DNA-binding region (H-T-H motif) is located at residues Ile55–Lys78.

This is an uncharacterized protein from Bacillus subtilis (strain 168).